The chain runs to 473 residues: C3a anaphylatoxin chemotactic receptor (473 aa).

Residues 1–23 (MESFTADTNSTDLHSRPLFKPQD) are Extracellular-facing. N9 carries an N-linked (GlcNAc...) asparagine glycan. A helical transmembrane segment spans residues 24-46 (IASMVILSLTCLLGLPGNGLVLW). Over 47-57 (VAGVKMKRTVN) the chain is Cytoplasmic. A helical membrane pass occupies residues 58 to 80 (TVWFLHLTLADFLCCLSLPFSVA). The Extracellular segment spans residues 81 to 96 (HLILRGHWPYGLFLCK). C95 and C172 are disulfide-bonded. A helical transmembrane segment spans residues 97 to 118 (LIPSVIILNMFASVFLLTAISL). At 119–139 (DRCLMVHKPIWCQNHRSVRTA) the chain is on the cytoplasmic side. Residues 140-160 (FAVCGCVWVVTFVMCIPVFVY) form a helical membrane-spanning segment. At 161-329 (RDLLVVDDYS…TPQVAITISR (169 aa)) the chain is on the extracellular side. Sulfotyrosine is present on residues Y174 and Y184. Residue N201 is glycosylated (N-linked (GlcNAc...) asparagine). The segment at 233–252 (FHTSPEDPFSQDSASQQPHY) is disordered. Y308 is modified (sulfotyrosine). A helical transmembrane segment spans residues 330–349 (LVVGFLVPFFIMITCYSLIV). Topologically, residues 350-366 (FRMRKTNLTKSRNKTLR) are cytoplasmic. Residues 367–389 (VAVAVVTVFFVCWIPYHIVGILL) form a helical membrane-spanning segment. Over 390 to 406 (VITDQESALREVVLPWD) the chain is Extracellular. The helical transmembrane segment at 407 to 427 (HMSIALASANSCFNPFLYALL) threads the bilayer. Residues 428 to 473 (GKDFRKKARQSVKGILEAAFSEELTHSTSCTQDKAPSKRNHMSTDV) are Cytoplasmic-facing. S448 is subject to Phosphoserine. T452 bears the Phosphothreonine mark.

It belongs to the G-protein coupled receptor 1 family. In terms of assembly, interacts with VGF-derived peptide TLQP-21.

The protein localises to the cell membrane. Functionally, receptor for the chemotactic and inflammatory peptide anaphylatoxin C3a. This receptor stimulates chemotaxis, granule enzyme release and superoxide anion production. This chain is C3a anaphylatoxin chemotactic receptor (C3ar1), found in Rattus norvegicus (Rat).